Here is a 72-residue protein sequence, read N- to C-terminus: MRRLVLLLAISLLLYQDLPVRSEFELDRICGYGTARCRKKCRSQEYRIGRCPNTFACCLRKWDESLLNRTKP.

A signal peptide spans 1–22; it reads MRRLVLLLAISLLLYQDLPVRS. 3 cysteine pairs are disulfide-bonded: Cys30/Cys57, Cys37/Cys51, and Cys41/Cys58.

It belongs to the beta-defensin family.

It is found in the secreted. Has antimicrobial activity. The polypeptide is Beta-defensin 104A (DEFB104A) (Gorilla gorilla gorilla (Western lowland gorilla)).